The following is a 104-amino-acid chain: Small ribosomal subunit protein uS10 (104 aa).

The protein belongs to the universal ribosomal protein uS10 family. Part of the 30S ribosomal subunit.

In terms of biological role, involved in the binding of tRNA to the ribosomes. The sequence is that of Small ribosomal subunit protein uS10 from Aliarcobacter butzleri (strain RM4018) (Arcobacter butzleri).